We begin with the raw amino-acid sequence, 457 residues long: Vasoactive intestinal polypeptide receptor (457 aa).

Residues Met1 to Gly19 form the signal peptide. Residues Gly20–Val141 are Extracellular-facing. 3 disulfides stabilise this stretch: Cys51-Cys73, Cys64-Cys105, and Cys87-Cys122. Residues Asn59, Asn70, Asn100, and Asn104 are each glycosylated (N-linked (GlcNAc...) asparagine). The chain crosses the membrane as a helical span at residues Lys142–Phe166. Over Arg167–Arg173 the chain is Cytoplasmic. The chain crosses the membrane as a helical span at residues Asn174–Ile193. Over Lys194–Lys215 the chain is Extracellular. A disulfide bridge links Cys214 with Cys284. A helical transmembrane segment spans residues Ala216–Leu239. Topologically, residues His240–Tyr253 are cytoplasmic. The chain crosses the membrane as a helical span at residues Phe254 to Val275. Residues Arg276–Pro292 lie on the Extracellular side of the membrane. A helical transmembrane segment spans residues Ile293–Ile316. Residues Arg317 to Lys341 lie on the Cytoplasmic side of the membrane. A helical membrane pass occupies residues Ser342–Pro361. The Extracellular segment spans residues Asp362–Glu373. A helical membrane pass occupies residues Leu374–Gly393. Topologically, residues Glu394–Val457 are cytoplasmic.

It belongs to the G-protein coupled receptor 2 family. Expressed in pituitary, hypothalamus, small intestine and ovarian follicles.

Its subcellular location is the cell membrane. Functionally, this is a receptor for VIP. The activity of this receptor is mediated by G proteins which activate adenylyl cyclase. The sequence is that of Vasoactive intestinal polypeptide receptor (VIPR1) from Meleagris gallopavo (Wild turkey).